The primary structure comprises 404 residues: Multidrug resistance protein MdtG (404 aa).

11 consecutive transmembrane segments (helical) span residues 19–39 (LGCFLTGAAFSLVMPFLPLYV), 56–76 (LVFSITFLFSAIASPFWGGLA), 90–110 (LGMAIVMLLMGMAQNIWQFLI), 113–133 (ALLGLLGGFIPNANALIATQV), 144–164 (TLSTGGVSGALLGPLAGGLLA), 171–191 (PVFFITASVLFICFLLTFFFI), 222–242 (LFVTTLIIQVATGSIAPILTL), 254–274 (IAFISGMIASVPGVAALLSAP), 288–308 (ILIVALIISVLLLIPMSFVQT), 317–337 (FLLGAADGALLPAVQTLLVYN), and 376–396 (AVFCVTAGVVLFNAIYSWNSL).

The protein belongs to the major facilitator superfamily. DHA1 family. MdtG (TC 2.A.1.2.20) subfamily.

The protein resides in the cell inner membrane. This Salmonella typhimurium (strain LT2 / SGSC1412 / ATCC 700720) protein is Multidrug resistance protein MdtG.